The chain runs to 220 residues: GTP cyclohydrolase 1 (220 aa).

Zn(2+) contacts are provided by Cys110, His113, and Cys181.

It belongs to the GTP cyclohydrolase I family. In terms of assembly, toroid-shaped homodecamer, composed of two pentamers of five dimers.

It catalyses the reaction GTP + H2O = 7,8-dihydroneopterin 3'-triphosphate + formate + H(+). The protein operates within cofactor biosynthesis; 7,8-dihydroneopterin triphosphate biosynthesis; 7,8-dihydroneopterin triphosphate from GTP: step 1/1. The protein is GTP cyclohydrolase 1 of Baumannia cicadellinicola subsp. Homalodisca coagulata.